We begin with the raw amino-acid sequence, 501 residues long: Phenylalanine--tRNA ligase alpha subunit (501 aa).

L-phenylalanine-binding residues include threonine 340 and phenylalanine 423. Glutamate 425 contacts Mg(2+). Phenylalanine 448 contacts L-phenylalanine.

This sequence belongs to the class-II aminoacyl-tRNA synthetase family. Phe-tRNA synthetase alpha subunit type 2 subfamily. In terms of assembly, tetramer of two alpha and two beta subunits. Requires Mg(2+) as cofactor.

Its subcellular location is the cytoplasm. It catalyses the reaction tRNA(Phe) + L-phenylalanine + ATP = L-phenylalanyl-tRNA(Phe) + AMP + diphosphate + H(+). The sequence is that of Phenylalanine--tRNA ligase alpha subunit from Methanococcus maripaludis (strain C7 / ATCC BAA-1331).